We begin with the raw amino-acid sequence, 35 residues long: Photosystem II reaction center protein T (35 aa).

A helical membrane pass occupies residues 3 to 23; it reads ALVYTFLLVSTLGIIFFAIFF.

Belongs to the PsbT family. As to quaternary structure, PSII is composed of 1 copy each of membrane proteins PsbA, PsbB, PsbC, PsbD, PsbE, PsbF, PsbH, PsbI, PsbJ, PsbK, PsbL, PsbM, PsbT, PsbY, PsbZ, Psb30/Ycf12, at least 3 peripheral proteins of the oxygen-evolving complex and a large number of cofactors. It forms dimeric complexes.

The protein localises to the plastid. It localises to the chloroplast thylakoid membrane. Functionally, found at the monomer-monomer interface of the photosystem II (PS II) dimer, plays a role in assembly and dimerization of PSII. PSII is a light-driven water plastoquinone oxidoreductase, using light energy to abstract electrons from H(2)O, generating a proton gradient subsequently used for ATP formation. This Ginkgo biloba (Ginkgo) protein is Photosystem II reaction center protein T.